A 497-amino-acid polypeptide reads, in one-letter code: Gasdermin-E (497 aa).

The interval 1–56 (MFAKATRSFLREVDAEGDLIAVSNLNDSDKSQLLSLVTKKKRFWCWQRPKYQFLSV) is membrane targeting domain. Cysteine 45 bears the S-(2-succinyl)cysteine mark. Lysine 120 is covalently cross-linked (Glycyl lysine isopeptide (Lys-Gly) (interchain with G-Cter in ubiquitin)). Residues cysteine 156, cysteine 168, and cysteine 180 each carry the S-(2-succinyl)cysteine modification. Lysine 189 participates in a covalent cross-link: Glycyl lysine isopeptide (Lys-Gly) (interchain with G-Cter in ubiquitin). Residues cysteine 235, cysteine 371, cysteine 409, cysteine 418, and cysteine 491 each carry the S-(2-succinyl)cysteine modification.

The protein belongs to the gasdermin family. Homooligomer; homooligomeric ring-shaped pore complex containing 27-28 subunits when inserted in the membrane. Cleavage at Asp-270 by CASP3 (mature and uncleaved precursor forms) or granzyme B (GZMB) relieves autoinhibition and is sufficient to initiate pyroptosis. Post-translationally, succination by the Krebs cycle intermediate fumarate, which leads to S-(2-succinyl)cysteine residues, inhibits processing by caspases, and ability to initiate pyroptosis. Succination modification is catalyzed by a non-enzymatic reaction caused by an accumulation of fumarate. In terms of processing, ubiquitinated on Lys-120 and Lys-189 via 'Lys-48'-linked polyubiquitin chains, leading to proteasomal degradation. Deubiquitinated by USP48, leading to increased stability. Palmitoylated.

It localises to the cell membrane. Its subcellular location is the cytoplasm. It is found in the cytosol. Its activity is regulated as follows. The full-length protein before cleavage is inactive: intramolecular interactions between N- and C-terminal domains mediate autoinhibition in the absence of activation signal. The intrinsic pyroptosis-inducing activity is carried by the released N-terminal moiety (Gasdermin-E, N-terminal) following cleavage by CASP3 or granzyme B (GZMB). Activated by NLRP1 in the absence of GSDMD expression: NLRP1 cleaves and activates CASP8, promoting downstream activation of CASP3 and subsequent activation of GSDME. In terms of biological role, precursor of a pore-forming protein that converts non-inflammatory apoptosis to pyroptosis. This form constitutes the precursor of the pore-forming protein: upon cleavage, the released N-terminal moiety (Gasdermin-E, N-terminal) binds to membranes and forms pores, triggering pyroptosis. Functionally, pore-forming protein produced by cleavage by CASP3 or granzyme B (GZMB), which converts non-inflammatory apoptosis to pyroptosis or promotes granzyme-mediated pyroptosis, respectively. After cleavage, moves to the plasma membrane, homooligomerizes within the membrane and forms pores of 10-15 nanometers (nm) of inner diameter, allowing the release of mature interleukins (IL1B and IL16) and triggering pyroptosis. Binds to inner leaflet lipids, bisphosphorylated phosphatidylinositols, such as phosphatidylinositol (4,5)-bisphosphate. Cleavage by CASP3 switches CASP3-mediated apoptosis induced by TNF or danger signals, such as chemotherapy drugs, to pyroptosis. Mediates secondary necrosis downstream of the mitochondrial apoptotic pathway and CASP3 activation as well as in response to viral agents. Exhibits bactericidal activity. Cleavage by GZMB promotes tumor suppressor activity by triggering robust anti-tumor immunity. Suppresses tumors by mediating granzyme-mediated pyroptosis in target cells of natural killer (NK) cells: cleavage by granzyme B (GZMB), delivered to target cells from NK-cells, triggers pyroptosis of tumor cells and tumor suppression. May play a role in the p53/TP53-regulated cellular response to DNA damage. The polypeptide is Gasdermin-E (Equus caballus (Horse)).